The sequence spans 930 residues: Isoleucine--tRNA ligase (930 aa).

Positions 57–67 (PYANGNIHVGH) match the 'HIGH' region motif. E554 serves as a coordination point for L-isoleucyl-5'-AMP. A 'KMSKS' region motif is present at residues 595–599 (KMSKS). ATP is bound at residue K598. Positions 888, 891, 908, and 911 each coordinate Zn(2+).

Belongs to the class-I aminoacyl-tRNA synthetase family. IleS type 1 subfamily. As to quaternary structure, monomer. It depends on Zn(2+) as a cofactor.

The protein localises to the cytoplasm. It catalyses the reaction tRNA(Ile) + L-isoleucine + ATP = L-isoleucyl-tRNA(Ile) + AMP + diphosphate. Its function is as follows. Catalyzes the attachment of isoleucine to tRNA(Ile). As IleRS can inadvertently accommodate and process structurally similar amino acids such as valine, to avoid such errors it has two additional distinct tRNA(Ile)-dependent editing activities. One activity is designated as 'pretransfer' editing and involves the hydrolysis of activated Val-AMP. The other activity is designated 'posttransfer' editing and involves deacylation of mischarged Val-tRNA(Ile). In Streptococcus pneumoniae (strain Taiwan19F-14), this protein is Isoleucine--tRNA ligase.